Reading from the N-terminus, the 316-residue chain is MHVIVPYTDVSPKTRLNSILTASERTAFAQAMLYDVISTLQSNGHTVELLIPTETVMQATDQRDQETIIDSTGVSTEAVSTSTSTHADTTEHNAASDNYVSQSPTHTLSVTPEAIMRILRDDDDPDNEASTQERDGDKEYIDITVDTAQNQIQSNQIVVTADDRALTPAVNSCLNRLSDTETPFSELAVVMADLALITPTAIERLFAREGDIVLAPGRGGGTNAIVVRHPAFRVDYHGTSYRDHYQAATDASLSVGVVDSMRLGTDIDKPTDLPEVLLHNNGMSSVWLQSAGIELNLDDNTGRVGITRKRKNEDVD.

The span at 72–85 (TGVSTEAVSTSTST) shows a compositional bias: low complexity. Disordered stretches follow at residues 72–107 (TGVS…PTHT) and 119–138 (LRDD…DGDK). A compositionally biased stretch (polar residues) spans 92–107 (HNAASDNYVSQSPTHT).

This sequence belongs to the CofC family. Homodimer.

The catalysed reaction is (2S)-2-phospholactate + GTP + H(+) = (2S)-lactyl-2-diphospho-5'-guanosine + diphosphate. Its pathway is cofactor biosynthesis; coenzyme F420 biosynthesis. In terms of biological role, guanylyltransferase that catalyzes the activation of (2S)-2-phospholactate (2-PL) as (2S)-lactyl-2-diphospho-5'-guanosine, via the condensation of 2-PL with GTP. It is involved in the biosynthesis of coenzyme F420, a hydride carrier cofactor. This Haloquadratum walsbyi (strain DSM 16790 / HBSQ001) protein is 2-phospho-L-lactate guanylyltransferase.